Reading from the N-terminus, the 7756-residue chain is Linear gramicidin synthase subunit C (7756 aa).

6 consecutive Carrier domains span residues 977–1052 (EPRN…AALQ), 2042–2116 (APAT…ADSS), 3557–3632 (APRT…ASLL), 4621–4695 (APAT…TVTD), 6141–6216 (APRK…AGLL), and 7200–7274 (APET…GDSV). Serine 1012, serine 2077, serine 3592, serine 4656, serine 6176, and serine 7235 each carry O-(pantetheine 4'-phosphoryl)serine.

It belongs to the ATP-dependent AMP-binding enzyme family. As to quaternary structure, large multienzyme complex composed of 4 subunits; LgrA, LgrB, LgrC and LgrD. Pantetheine 4'-phosphate is required as a cofactor.

Activates the 7th to 12th amino acids (Val, D-Val, Trp, D-Leu, Xaa and D-Leu) in linear gramicidin and catalyzes the formation of the peptide bond between them. This enzyme is also responsible for the epimerization of the 8th (D-Val), the 10th (D-Leu) and 12th (D-Leu) amino acids. The 11th (Xaa) amino acid is Trp in linear gramicidin A; Phe in linear gramicidin B and Tyr in linear gramicidin C. This is Linear gramicidin synthase subunit C (lgrC) from Brevibacillus parabrevis.